Consider the following 273-residue polypeptide: WIMGHMVNAIAQIDEFVSLGANSIETDVSFDKNANPEYTYHGIPCDCGRTCTKWEYFNTFLGGLRKATTPGDSKYHEKLVLVVFDLKTGSLYDNQAYDAGTKLAKSLLQNYWNKGNNGGRAYIVLSIPNLDHYKLITGFKETLTKEEHPELMDKVGYDFSGNDDIGDVAKAYKKAGVTGHVWQSDGITNCLLRGLDRVRKAVANRDSSNGYINKVYYWTVDKRASTRDALDAGVDGIMTNYPDVIADVLSESAYTAKFRIATYDDNPWETFKN.

H5 is a catalytic residue. Mg(2+) is bound by residues E25 and D27. H41 (nucleophile) is an active-site residue. 2 disulfides stabilise this stretch: C45-C51 and C47-C190. D85 provides a ligand contact to Mg(2+).

It belongs to the arthropod phospholipase D family. Class II subfamily. It depends on Mg(2+) as a cofactor. Expressed by the venom gland.

The protein resides in the secreted. It catalyses the reaction an N-(acyl)-sphingosylphosphocholine = an N-(acyl)-sphingosyl-1,3-cyclic phosphate + choline. The catalysed reaction is an N-(acyl)-sphingosylphosphoethanolamine = an N-(acyl)-sphingosyl-1,3-cyclic phosphate + ethanolamine. The enzyme catalyses a 1-acyl-sn-glycero-3-phosphocholine = a 1-acyl-sn-glycero-2,3-cyclic phosphate + choline. It carries out the reaction a 1-acyl-sn-glycero-3-phosphoethanolamine = a 1-acyl-sn-glycero-2,3-cyclic phosphate + ethanolamine. Dermonecrotic toxins cleave the phosphodiester linkage between the phosphate and headgroup of certain phospholipids (sphingolipid and lysolipid substrates), forming an alcohol (often choline) and a cyclic phosphate. This toxin acts on sphingomyelin (SM). It may also act on ceramide phosphoethanolamine (CPE), lysophosphatidylcholine (LPC) and lysophosphatidylethanolamine (LPE), but not on lysophosphatidylserine (LPS), and lysophosphatidylglycerol (LPG). It acts by transphosphatidylation, releasing exclusively cyclic phosphate products as second products. Induces dermonecrosis, hemolysis, increased vascular permeability, edema, inflammatory response, and platelet aggregation. The polypeptide is Dermonecrotic toxin LsaSicTox-alphaIB1bi (Loxosceles sabina (Tucson recluse spider)).